The following is a 473-amino-acid chain: Photosystem II CP43 reaction center protein (473 aa).

The propeptide occupies 1-14 (MKILYSLRRFYHVE). The residue at position 15 (T15) is an N-acetylthreonine. T15 carries the phosphothreonine modification. The next 5 helical transmembrane spans lie at 69-93 (LFEV…PHLA), 134-155 (LLGP…KDRN), 178-200 (KALY…RKIT), 255-275 (KPFA…LSYS), and 291-312 (WFNN…ASQA). Residue E367 participates in [CaMn4O5] cluster binding. Residues 447 to 471 (RARAAAAGFEKGIDRDLEPVLYMNP) form a helical membrane-spanning segment.

The protein belongs to the PsbB/PsbC family. PsbC subfamily. As to quaternary structure, PSII is composed of 1 copy each of membrane proteins PsbA, PsbB, PsbC, PsbD, PsbE, PsbF, PsbH, PsbI, PsbJ, PsbK, PsbL, PsbM, PsbT, PsbX, PsbY, PsbZ, Psb30/Ycf12, at least 3 peripheral proteins of the oxygen-evolving complex and a large number of cofactors. It forms dimeric complexes. It depends on Binds multiple chlorophylls and provides some of the ligands for the Ca-4Mn-5O cluster of the oxygen-evolving complex. It may also provide a ligand for a Cl- that is required for oxygen evolution. PSII binds additional chlorophylls, carotenoids and specific lipids. as a cofactor. Phosphorylated on threonine residue(s); phosphorylation increases with increasing light levels.

It is found in the plastid. The protein localises to the chloroplast thylakoid membrane. Its function is as follows. One of the components of the core complex of photosystem II (PSII). It binds chlorophyll and helps catalyze the primary light-induced photochemical processes of PSII. PSII is a light-driven water:plastoquinone oxidoreductase, using light energy to abstract electrons from H(2)O, generating O(2) and a proton gradient subsequently used for ATP formation. This chain is Photosystem II CP43 reaction center protein, found in Secale cereale (Rye).